The chain runs to 483 residues: Matrix metalloproteinase-20 (483 aa).

Residues 1-22 (MKVLPASGLAVLLVTALKFSAA) form the signal peptide. A propeptide spans 23 to 107 (APSLFAATPR…PRCGVPDVAN (85 aa)) (activation peptide). The Cysteine switch motif lies at 98-105 (PRCGVPDV). Zn(2+) is bound at residue C100. Residues E164, A165, and D166 each contribute to the Ca(2+) site. Positions 176 and 178 each coordinate Zn(2+). Residues D183, G184, R186, and T188 each coordinate Ca(2+). H191 is a binding site for Zn(2+). Residues E197, G198, G200, and D202 each contribute to the Ca(2+) site. H204 is a binding site for Zn(2+). Positions 206 and 209 each coordinate Ca(2+). H226 provides a ligand contact to Zn(2+). E227 is an active-site residue. Zn(2+) contacts are provided by H230 and H236. Hemopexin repeat units lie at residues 293 to 343 (PDIC…FPQL), 344 to 389 (MSNV…GFPR), 391 to 439 (VQRI…FSGV), and 440 to 483 (NGQI…WIGC). C296 and C483 are joined by a disulfide.

This sequence belongs to the peptidase M10A family. Requires Zn(2+) as cofactor. The cofactor is Ca(2+). Post-translationally, autoactivates at least at the 107-Asn-|-Tyr-108 site. In terms of tissue distribution, expressed specifically in the enamel organ.

It is found in the secreted. The protein localises to the extracellular space. The protein resides in the extracellular matrix. Degrades amelogenin, the major protein component of the enamel matrix and two of the macromolecules characterizing the cartilage extracellular matrix: aggrecan and the cartilage oligomeric matrix protein (COMP). May play a central role in tooth enamel formation. This is Matrix metalloproteinase-20 (MMP20) from Sus scrofa (Pig).